The sequence spans 120 residues: NAD(P)H-quinone oxidoreductase subunit 3, chloroplastic (120 aa).

3 helical membrane-spanning segments follow: residues 7–27, 63–83, and 89–109; these read YDSF…AFSI, YMFA…YPWA, and LGLF…VGLV.

This sequence belongs to the complex I subunit 3 family. NDH is composed of at least 16 different subunits, 5 of which are encoded in the nucleus.

The protein localises to the plastid. The protein resides in the chloroplast thylakoid membrane. The catalysed reaction is a plastoquinone + NADH + (n+1) H(+)(in) = a plastoquinol + NAD(+) + n H(+)(out). The enzyme catalyses a plastoquinone + NADPH + (n+1) H(+)(in) = a plastoquinol + NADP(+) + n H(+)(out). NDH shuttles electrons from NAD(P)H:plastoquinone, via FMN and iron-sulfur (Fe-S) centers, to quinones in the photosynthetic chain and possibly in a chloroplast respiratory chain. The immediate electron acceptor for the enzyme in this species is believed to be plastoquinone. Couples the redox reaction to proton translocation, and thus conserves the redox energy in a proton gradient. The protein is NAD(P)H-quinone oxidoreductase subunit 3, chloroplastic of Adiantum capillus-veneris (Maidenhair fern).